The following is a 196-amino-acid chain: Imidazoleglycerol-phosphate dehydratase (196 aa).

Belongs to the imidazoleglycerol-phosphate dehydratase family.

The protein resides in the cytoplasm. The catalysed reaction is D-erythro-1-(imidazol-4-yl)glycerol 3-phosphate = 3-(imidazol-4-yl)-2-oxopropyl phosphate + H2O. It participates in amino-acid biosynthesis; L-histidine biosynthesis; L-histidine from 5-phospho-alpha-D-ribose 1-diphosphate: step 6/9. This Clostridium novyi (strain NT) protein is Imidazoleglycerol-phosphate dehydratase.